Consider the following 146-residue polypeptide: Phospholipase A2 (146 aa).

An N-terminal signal peptide occupies residues 1 to 18 (MAFLVFAFLTLMAVETYG). Intrachain disulfides connect Cys44/Cys137, Cys46/Cys62, Cys61/Cys117, Cys67/Cys144, Cys68/Cys110, Cys77/Cys103, and Cys95/Cys108. Ca(2+) is bound by residues Tyr45, Gly47, and Gly49. His65 is a catalytic residue. Asp66 is a Ca(2+) binding site. A glycan (N-linked (GlcNAc...) asparagine) is linked at Asn85. Asp111 is an active-site residue. Asn126 carries N-linked (GlcNAc...) asparagine glycosylation.

The cofactor is Ca(2+). In terms of processing, N-glycosylated. Glycosylated with mannose chains including Man2(GlcNAc), Man2(GlcNAc)2, Man2(GlcNAc)3, Man2(GlcNAc)4 and Man2(GlcNAc)5. As to expression, expressed by the skin glands (at protein level).

The protein localises to the secreted. It catalyses the reaction a 1,2-diacyl-sn-glycero-3-phosphocholine + H2O = a 1-acyl-sn-glycero-3-phosphocholine + a fatty acid + H(+). Its function is as follows. PLA2 catalyzes the calcium-dependent hydrolysis of the 2-acyl groups in 3-sn-phosphoglycerides. The chain is Phospholipase A2 from Pithecopus azureus (Orange-legged monkey tree frog).